The chain runs to 375 residues: Succinyl-diaminopimelate desuccinylase (375 aa).

His-66 is a Zn(2+) binding site. Asp-68 is a catalytic residue. Asp-99 provides a ligand contact to Zn(2+). Glu-133 serves as the catalytic Proton acceptor. The Zn(2+) site is built by Glu-134, Glu-162, and His-348.

The protein belongs to the peptidase M20A family. DapE subfamily. Homodimer. Zn(2+) is required as a cofactor. It depends on Co(2+) as a cofactor.

It carries out the reaction N-succinyl-(2S,6S)-2,6-diaminopimelate + H2O = (2S,6S)-2,6-diaminopimelate + succinate. It functions in the pathway amino-acid biosynthesis; L-lysine biosynthesis via DAP pathway; LL-2,6-diaminopimelate from (S)-tetrahydrodipicolinate (succinylase route): step 3/3. Its function is as follows. Catalyzes the hydrolysis of N-succinyl-L,L-diaminopimelic acid (SDAP), forming succinate and LL-2,6-diaminopimelate (DAP), an intermediate involved in the bacterial biosynthesis of lysine and meso-diaminopimelic acid, an essential component of bacterial cell walls. This Alkalilimnicola ehrlichii (strain ATCC BAA-1101 / DSM 17681 / MLHE-1) protein is Succinyl-diaminopimelate desuccinylase.